We begin with the raw amino-acid sequence, 911 residues long: FIGNL1-interacting regulator of recombination and mitosis (911 aa).

The tract at residues 830 to 853 is disordered; sequence SEKSQPAQTPLTEEPCAKRARQET. Residues 844-853 show a composition bias toward basic and acidic residues; it reads PCAKRARQET.

The protein resides in the chromosome. The protein localises to the centromere. It localises to the kinetochore. Its subcellular location is the nucleus. It is found in the midbody. The protein resides in the cytoplasm. The protein localises to the cytoskeleton. It localises to the spindle. Its function is as follows. May play a role in chromosome segregation. The chain is FIGNL1-interacting regulator of recombination and mitosis from Danio rerio (Zebrafish).